The following is a 510-amino-acid chain: 2-isopropylmalate synthase (510 aa).

The Pyruvate carboxyltransferase domain occupies Leu-5–Val-267. Asp-14, His-202, His-204, and Asn-238 together coordinate Mn(2+). Positions Lys-392–Val-510 are regulatory domain.

This sequence belongs to the alpha-IPM synthase/homocitrate synthase family. LeuA type 1 subfamily. Homodimer. Requires Mn(2+) as cofactor.

It is found in the cytoplasm. The enzyme catalyses 3-methyl-2-oxobutanoate + acetyl-CoA + H2O = (2S)-2-isopropylmalate + CoA + H(+). The protein operates within amino-acid biosynthesis; L-leucine biosynthesis; L-leucine from 3-methyl-2-oxobutanoate: step 1/4. Functionally, catalyzes the condensation of the acetyl group of acetyl-CoA with 3-methyl-2-oxobutanoate (2-ketoisovalerate) to form 3-carboxy-3-hydroxy-4-methylpentanoate (2-isopropylmalate). The chain is 2-isopropylmalate synthase from Nitrosospira multiformis (strain ATCC 25196 / NCIMB 11849 / C 71).